We begin with the raw amino-acid sequence, 207 residues long: Large ribosomal subunit protein uL4 (207 aa).

Residues 45 to 57 are compositionally biased toward polar residues; that stretch reads RQGTHSVKNRSTV. A disordered region spans residues 45-77; that stretch reads RQGTHSVKNRSTVSGGGRKPWRQKGTGNARQGS.

This sequence belongs to the universal ribosomal protein uL4 family. As to quaternary structure, part of the 50S ribosomal subunit.

Functionally, one of the primary rRNA binding proteins, this protein initially binds near the 5'-end of the 23S rRNA. It is important during the early stages of 50S assembly. It makes multiple contacts with different domains of the 23S rRNA in the assembled 50S subunit and ribosome. Its function is as follows. Forms part of the polypeptide exit tunnel. In Oenococcus oeni (strain ATCC BAA-331 / PSU-1), this protein is Large ribosomal subunit protein uL4.